Here is a 471-residue protein sequence, read N- to C-terminus: tRNA-2-methylthio-N(6)-dimethylallyladenosine synthase (471 aa).

The MTTase N-terminal domain occupies 29–146; that stretch reads KKFHIKTYGC…LPELIAKVNR (118 aa). [4Fe-4S] cluster-binding residues include Cys38, Cys74, Cys109, Cys187, Cys191, and Cys194. The Radical SAM core domain maps to 173-405; that stretch reads RVPQSSAFLS…QQLLKEKQLE (233 aa). One can recognise a TRAM domain in the interval 408–467; it reads KKMIGKTVTVLFDKKHPDKISGRTEYMQQVFSDDSNLLDKIVTMRVEDASTFTLKCTAED.

Belongs to the methylthiotransferase family. MiaB subfamily. Monomer. Requires [4Fe-4S] cluster as cofactor.

It localises to the cytoplasm. The enzyme catalyses N(6)-dimethylallyladenosine(37) in tRNA + (sulfur carrier)-SH + AH2 + 2 S-adenosyl-L-methionine = 2-methylsulfanyl-N(6)-dimethylallyladenosine(37) in tRNA + (sulfur carrier)-H + 5'-deoxyadenosine + L-methionine + A + S-adenosyl-L-homocysteine + 2 H(+). Its function is as follows. Catalyzes the methylthiolation of N6-(dimethylallyl)adenosine (i(6)A), leading to the formation of 2-methylthio-N6-(dimethylallyl)adenosine (ms(2)i(6)A) at position 37 in tRNAs that read codons beginning with uridine. The polypeptide is tRNA-2-methylthio-N(6)-dimethylallyladenosine synthase (Neorickettsia sennetsu (strain ATCC VR-367 / Miyayama) (Ehrlichia sennetsu)).